The sequence spans 95 residues: Aspartyl/glutamyl-tRNA(Asn/Gln) amidotransferase subunit C (95 aa).

This sequence belongs to the GatC family. As to quaternary structure, heterotrimer of A, B and C subunits.

It catalyses the reaction L-glutamyl-tRNA(Gln) + L-glutamine + ATP + H2O = L-glutaminyl-tRNA(Gln) + L-glutamate + ADP + phosphate + H(+). It carries out the reaction L-aspartyl-tRNA(Asn) + L-glutamine + ATP + H2O = L-asparaginyl-tRNA(Asn) + L-glutamate + ADP + phosphate + 2 H(+). Allows the formation of correctly charged Asn-tRNA(Asn) or Gln-tRNA(Gln) through the transamidation of misacylated Asp-tRNA(Asn) or Glu-tRNA(Gln) in organisms which lack either or both of asparaginyl-tRNA or glutaminyl-tRNA synthetases. The reaction takes place in the presence of glutamine and ATP through an activated phospho-Asp-tRNA(Asn) or phospho-Glu-tRNA(Gln). The protein is Aspartyl/glutamyl-tRNA(Asn/Gln) amidotransferase subunit C of Azoarcus sp. (strain BH72).